Consider the following 141-residue polypeptide: Large ribosomal subunit protein uL16 (141 aa).

This sequence belongs to the universal ribosomal protein uL16 family. As to quaternary structure, part of the 50S ribosomal subunit.

Functionally, binds 23S rRNA and is also seen to make contacts with the A and possibly P site tRNAs. The protein is Large ribosomal subunit protein uL16 of Aliarcobacter butzleri (strain RM4018) (Arcobacter butzleri).